The sequence spans 104 residues: MAKNNQKIRIRLKAYDHMALDQSAEKIVETAKKSGAEVSGPVPLPTEKQIITILRAVHKYKDSREQFEMRTHKRLIDILNPTPKTVDALMRLDLPAGVDIEIKL.

This sequence belongs to the universal ribosomal protein uS10 family. Part of the 30S ribosomal subunit.

Its function is as follows. Involved in the binding of tRNA to the ribosomes. The sequence is that of Small ribosomal subunit protein uS10 from Alkaliphilus oremlandii (strain OhILAs) (Clostridium oremlandii (strain OhILAs)).